Here is a 63-residue protein sequence, read N- to C-terminus: Large ribosomal subunit protein uL29 (63 aa).

Belongs to the universal ribosomal protein uL29 family.

This chain is Large ribosomal subunit protein uL29, found in Shewanella loihica (strain ATCC BAA-1088 / PV-4).